Consider the following 506-residue polypeptide: NAD(P)H-quinone oxidoreductase subunit 2 (506 aa).

13 consecutive transmembrane segments (helical) span residues 14 to 34, 42 to 62, 79 to 99, 108 to 128, 132 to 152, 167 to 187, 206 to 226, 240 to 260, 276 to 296, 302 to 322, 330 to 350, 374 to 394, and 409 to 429; these read AIIPEAFILLGIVGTLLVDLA, WAPIICYLSIGSSLFSLALQW, LAIAFRAIIALSTLVSLLISW, PIGEFAAIVLSATLGAMLLCG, LISIFISLETLSVASYLLSGY, LLVGSAAAAVYLYGSSFLYGL, FITSLALVFVLSTVAFKIAAV, PTPVVAFLSVGSKTAGFAFAI, LLFTILAILSMALGNVVALAQ, MLAYSSIGQAGFVMIGIVSGT, VLYLAAYLFMNLGAFSCVILF, LGLSLCLLSLGGLPPMLGFFG, and LLVIIGLVTSVISIYYYISVI.

It belongs to the complex I subunit 2 family. In terms of assembly, NDH-1 can be composed of about 15 different subunits; different subcomplexes with different compositions have been identified which probably have different functions.

The protein resides in the cellular thylakoid membrane. It carries out the reaction a plastoquinone + NADH + (n+1) H(+)(in) = a plastoquinol + NAD(+) + n H(+)(out). The enzyme catalyses a plastoquinone + NADPH + (n+1) H(+)(in) = a plastoquinol + NADP(+) + n H(+)(out). In terms of biological role, NDH-1 shuttles electrons from an unknown electron donor, via FMN and iron-sulfur (Fe-S) centers, to quinones in the respiratory and/or the photosynthetic chain. The immediate electron acceptor for the enzyme in this species is believed to be plastoquinone. Couples the redox reaction to proton translocation, and thus conserves the redox energy in a proton gradient. Cyanobacterial NDH-1 also plays a role in inorganic carbon-concentration. The protein is NAD(P)H-quinone oxidoreductase subunit 2 of Prochlorococcus marinus (strain MIT 9312).